The following is a 398-amino-acid chain: Type II secretion system protein L (398 aa).

Residues methionine 1–proline 248 lie on the Cytoplasmic side of the membrane. A helical transmembrane segment spans residues valine 249 to leucine 265. The Periplasmic segment spans residues histidine 266 to alanine 398.

It belongs to the GSP L family. As to quaternary structure, type II secretion system is composed of four main components: the outer membrane complex, the inner membrane complex, the cytoplasmic secretion ATPase and the periplasm-spanning pseudopilus. Forms homodimers. Interacts with PulM/GspM. Interacts with PulE/GspE and PulF/GspF.

Its subcellular location is the cell inner membrane. Functionally, inner membrane component of the type II secretion system required for the energy-dependent secretion of extracellular factors such as proteases and toxins from the periplasm. Plays a role in the complex assembly and recruits PulM resulting in a stable complex in the inner membrane. Provides thus a link between the energy-providing PulE protein in the cytoplasm and the rest of the T2SS machinery. This Klebsiella pneumoniae protein is Type II secretion system protein L (pulL).